A 66-amino-acid chain; its full sequence is Stress-induced protein KIN2 (66 aa).

Positions 1–10 (MSETNKNAFQ) are enriched in polar residues. The segment at 1 to 20 (MSETNKNAFQAGQAAGKAEE) is disordered. 2 repeats span residues 31–35 (DAAAA) and 49–53 (DAAVG).

As to quaternary structure, interacts with DEK3. Expressed at high levels in embryos and mature seeds.

The protein is Stress-induced protein KIN2 of Arabidopsis thaliana (Mouse-ear cress).